Consider the following 738-residue polypeptide: Polyribonucleotide nucleotidyltransferase (738 aa).

Residues aspartate 487 and aspartate 493 each coordinate Mg(2+). The region spanning 554–613 (PKIVTMTINPDKIRDVIGPGGKMINSIIDQTGVKIDIEQDGTVFIASTDQEGIDLAMSMI) is the KH domain. Residues 623-691 (GEVYDATVRR…DKGRVNASRK (69 aa)) form the S1 motif domain. Residues 704-738 (EAYEAKRKAARESRPPRDSRPPRRDGDRRPPRSTN) form a disordered region.

It belongs to the polyribonucleotide nucleotidyltransferase family. The cofactor is Mg(2+).

It is found in the cytoplasm. The catalysed reaction is RNA(n+1) + phosphate = RNA(n) + a ribonucleoside 5'-diphosphate. In terms of biological role, involved in mRNA degradation. Catalyzes the phosphorolysis of single-stranded polyribonucleotides processively in the 3'- to 5'-direction. In Exiguobacterium sp. (strain ATCC BAA-1283 / AT1b), this protein is Polyribonucleotide nucleotidyltransferase.